The following is a 350-amino-acid chain: Small ribosomal subunit biogenesis GTPase RsgA (350 aa).

Over residues 1 to 17 the composition is skewed to polar residues; it reads MSKNKLSKGQQRRVNAN. The tract at residues 1-27 is disordered; the sequence is MSKNKLSKGQQRRVNANHQRRLKTSAE. The 170-residue stretch at 104–273 folds into the CP-type G domain; sequence TSVLTRPDFY…VIDSPGVREF (170 aa). Residues 160 to 163 and 214 to 222 each bind GTP; these read NKID and GQSGVGKSS. 4 residues coordinate Zn(2+): Cys297, Cys302, His304, and Cys310.

This sequence belongs to the TRAFAC class YlqF/YawG GTPase family. RsgA subfamily. As to quaternary structure, monomer. Associates with 30S ribosomal subunit, binds 16S rRNA. The cofactor is Zn(2+).

The protein resides in the cytoplasm. Its function is as follows. One of several proteins that assist in the late maturation steps of the functional core of the 30S ribosomal subunit. Helps release RbfA from mature subunits. May play a role in the assembly of ribosomal proteins into the subunit. Circularly permuted GTPase that catalyzes slow GTP hydrolysis, GTPase activity is stimulated by the 30S ribosomal subunit. In Salmonella dublin (strain CT_02021853), this protein is Small ribosomal subunit biogenesis GTPase RsgA.